Reading from the N-terminus, the 303-residue chain is Putative S-adenosyl-L-methionine-dependent methyltransferase MAB_0213c (303 aa).

S-adenosyl-L-methionine is bound by residues D126 and D155 to L156.

It belongs to the UPF0677 family.

Its function is as follows. Exhibits S-adenosyl-L-methionine-dependent methyltransferase activity. In Mycobacteroides abscessus (strain ATCC 19977 / DSM 44196 / CCUG 20993 / CIP 104536 / JCM 13569 / NCTC 13031 / TMC 1543 / L948) (Mycobacterium abscessus), this protein is Putative S-adenosyl-L-methionine-dependent methyltransferase MAB_0213c.